The chain runs to 313 residues: tRNA-cytidine(32) 2-sulfurtransferase (313 aa).

Residues 47 to 52 carry the PP-loop motif motif; sequence SGGKDS. [4Fe-4S] cluster-binding residues include Cys122, Cys125, and Cys213. The segment at 288 to 313 is disordered; that stretch reads PVGWQPEDDEDTEKRPPVRLDVLEIK. Over residues 299 to 313 the composition is skewed to basic and acidic residues; that stretch reads TEKRPPVRLDVLEIK.

This sequence belongs to the TtcA family. As to quaternary structure, homodimer. Mg(2+) is required as a cofactor. The cofactor is [4Fe-4S] cluster.

It is found in the cytoplasm. The catalysed reaction is cytidine(32) in tRNA + S-sulfanyl-L-cysteinyl-[cysteine desulfurase] + AH2 + ATP = 2-thiocytidine(32) in tRNA + L-cysteinyl-[cysteine desulfurase] + A + AMP + diphosphate + H(+). The protein operates within tRNA modification. Its function is as follows. Catalyzes the ATP-dependent 2-thiolation of cytidine in position 32 of tRNA, to form 2-thiocytidine (s(2)C32). The sulfur atoms are provided by the cysteine/cysteine desulfurase (IscS) system. The polypeptide is tRNA-cytidine(32) 2-sulfurtransferase (Yersinia pseudotuberculosis serotype O:1b (strain IP 31758)).